Reading from the N-terminus, the 98-residue chain is MTIDANHYDVIVAPVITEKATMASEYNKVVFKVARKATKPQIKEAVEKLFDVKVKSVNTLVRKGKTKVFRGRLGSHSDNKRAVVTLEEGHRIDVTTGL.

It belongs to the universal ribosomal protein uL23 family. Part of the 50S ribosomal subunit. Contacts protein L29, and trigger factor when it is bound to the ribosome.

In terms of biological role, one of the early assembly proteins it binds 23S rRNA. One of the proteins that surrounds the polypeptide exit tunnel on the outside of the ribosome. Forms the main docking site for trigger factor binding to the ribosome. This is Large ribosomal subunit protein uL23 from Nitrobacter winogradskyi (strain ATCC 25391 / DSM 10237 / CIP 104748 / NCIMB 11846 / Nb-255).